Reading from the N-terminus, the 155-residue chain is Nascent polypeptide-associated complex subunit beta (155 aa).

Disordered stretches follow at residues 1–35 (MDQAKLARMQQSVRIGGKGTPRRKVKKVHKSSGAD) and 116–155 (LAESYQNMQKNQAGADGKKDDEEDDIPDLVEGENFESNVE). Basic residues predominate over residues 20–30 (TPRRKVKKVHK). Positions 33–98 (GADDKKLQAT…GEEKELTELV (66 aa)) constitute an NAC-A/B domain. Acidic residues predominate over residues 136–155 (DEEDDIPDLVEGENFESNVE).

The protein belongs to the NAC-beta family. Part of the nascent polypeptide-associated complex (NAC), consisting of egd2 and egd1. NAC associates with ribosomes via egd1.

It is found in the cytoplasm. Its subcellular location is the nucleus. Its function is as follows. Component of the nascent polypeptide-associated complex (NAC), a dynamic component of the ribosomal exit tunnel, protecting the emerging polypeptides from interaction with other cytoplasmic proteins to ensure appropriate nascent protein targeting. The NAC complex also promotes mitochondrial protein import by enhancing productive ribosome interactions with the outer mitochondrial membrane and blocks the inappropriate interaction of ribosomes translating non-secretory nascent polypeptides with translocation sites in the membrane of the endoplasmic reticulum. EGD1 may act as a transcription factor that exert a negative effect on the expression of several genes that are transcribed by RNA polymerase II. This is Nascent polypeptide-associated complex subunit beta (egd1) from Aspergillus niger (strain ATCC MYA-4892 / CBS 513.88 / FGSC A1513).